The chain runs to 177 residues: Trafficking regulator of GLUT4 1 (177 aa).

Residues 1–105 (MAHPVQSEFP…QDQEAPRDYL (105 aa)) lie on the Cytoplasmic side of the membrane. A phosphoserine mark is found at serine 48, serine 87, and serine 88. The disordered stretch occupies residues 71 to 92 (EAPLPRSPSRASSRRASSIATT). Low complexity predominate over residues 72–88 (APLPRSPSRASSRRASS). Positions 106-126 (ILAVVACFCPVWPLNLIPLII) form an intramembrane region, helical. At 127 to 153 (SIMSRSSMQQGNVDGARRLGRLARLLS) the chain is on the cytoplasmic side. Residues 154 to 174 (ITLIIMGIVIIMVAVTVNFTV) traverse the membrane as a helical segment. The Extracellular portion of the chain corresponds to 175-177 (QKK).

This sequence belongs to the CD225/Dispanin family. In terms of assembly, interacts with SLC2A4; the interaction is required for proper SLC2A4 reacycling after insulin stimulation. As to expression, expressed at high levels in heart, mammary gland, adrenal gland, stomach, smooth muscle and skeletal muscle, and at lower levels in brain and lung. Strongly down-regulated in lung cancer tissues, due to hypermethylation of the corresponding locus. Expressed in adipose tissue.

The protein localises to the cell membrane. It localises to the endomembrane system. It is found in the cytoplasm. Its subcellular location is the perinuclear region. Its function is as follows. Regulates insulin-mediated adipose tissue glucose uptake and transport by modulation of SLC2A4 recycling. Not required for SLC2A4 membrane fusion upon an initial stimulus, but rather is necessary for proper protein recycling during prolonged insulin stimulation. This is Trafficking regulator of GLUT4 1 from Homo sapiens (Human).